The sequence spans 377 residues: Phosphoserine aminotransferase (377 aa).

R43 serves as a coordination point for L-glutamate. Residues W105, T164, D189, and Q212 each contribute to the pyridoxal 5'-phosphate site. K213 carries the post-translational modification N6-(pyridoxal phosphate)lysine. Position 254 to 255 (254 to 255) interacts with pyridoxal 5'-phosphate; it reads NT.

This sequence belongs to the class-V pyridoxal-phosphate-dependent aminotransferase family. SerC subfamily. As to quaternary structure, homodimer. Pyridoxal 5'-phosphate is required as a cofactor.

Its subcellular location is the cytoplasm. It catalyses the reaction O-phospho-L-serine + 2-oxoglutarate = 3-phosphooxypyruvate + L-glutamate. The enzyme catalyses 4-(phosphooxy)-L-threonine + 2-oxoglutarate = (R)-3-hydroxy-2-oxo-4-phosphooxybutanoate + L-glutamate. The protein operates within amino-acid biosynthesis; L-serine biosynthesis; L-serine from 3-phospho-D-glycerate: step 2/3. Its pathway is cofactor biosynthesis; pyridoxine 5'-phosphate biosynthesis; pyridoxine 5'-phosphate from D-erythrose 4-phosphate: step 3/5. In terms of biological role, catalyzes the reversible conversion of 3-phosphohydroxypyruvate to phosphoserine and of 3-hydroxy-2-oxo-4-phosphonooxybutanoate to phosphohydroxythreonine. The protein is Phosphoserine aminotransferase of Bordetella pertussis (strain Tohama I / ATCC BAA-589 / NCTC 13251).